We begin with the raw amino-acid sequence, 936 residues long: Probable outer membrane protein pmp7 (936 aa).

The N-terminal stretch at 1–23 (MKSSVSWLFFSSIPLFSSLSIVA) is a signal peptide. The Autotransporter domain maps to 636–936 (GEPFERELWL…NTNLGSKFCF (301 aa)).

Belongs to the PMP outer membrane protein family.

Its subcellular location is the secreted. The protein resides in the cell wall. It is found in the cell outer membrane. The protein is Probable outer membrane protein pmp7 (pmp7) of Chlamydia pneumoniae (Chlamydophila pneumoniae).